Reading from the N-terminus, the 366-residue chain is Galactoside alpha-(1,2)-fucosyltransferase 1 (366 aa).

The Cytoplasmic portion of the chain corresponds to Met1–Gln8. A helical; Signal-anchor for type II membrane protein membrane pass occupies residues Leu9 to Phe25. Residues Leu26 to Pro366 lie on the Lumenal side of the membrane. Asn66, Asn302, and Asn328 each carry an N-linked (GlcNAc...) asparagine glycan.

This sequence belongs to the glycosyltransferase 11 family.

The protein localises to the golgi apparatus. It is found in the golgi stack membrane. It catalyses the reaction a beta-D-galactosyl-(1-&gt;4)-N-acetyl-beta-D-glucosaminyl derivative + GDP-beta-L-fucose = an alpha-L-Fuc-(1-&gt;2)-beta-D-Gal-(1-&gt;4)-beta-D-GlcNAc derivative + GDP + H(+). The enzyme catalyses a ganglioside GA1 + GDP-beta-L-fucose = a ganglioside Fuc-GA1 + GDP + H(+). It carries out the reaction a beta-D-Gal-(1-&gt;3)-beta-D-GlcNAc-(1-&gt;3)-beta-D-Gal-(1-&gt;4)-beta-D-Glc-(1&lt;-&gt;1')-Cer(d18:1(4E)) + GDP-beta-L-fucose = alpha-L-fucosyl-(1-&gt;2)- beta-D-galactosyl-(1-&gt;3)-N-acetyl-beta-D-glucosaminyl-(1-&gt;3)-beta-D-galactosyl-(1-&gt;4)-beta-D-glucosyl-(1&lt;-&gt;1')-N-acylsphing-4-enine + GDP + H(+). The catalysed reaction is a neolactoside nLc4Cer(d18:1(4E)) + GDP-beta-L-fucose = a neolactoside IV(2)-alpha-Fuc-nLc4Cer(d18:1(4E)) + GDP + H(+). It catalyses the reaction a ganglioside GM1 + GDP-beta-L-fucose = a ganglioside Fuc-GM1 + GDP + H(+). The enzyme catalyses beta-D-galactosyl-(1-&gt;3)-N-acetyl-D-galactosamine + GDP-beta-L-fucose = alpha-L-fucosyl-(1-&gt;2)-beta-D-galactosyl-(1-&gt;3)-N-acetyl-D-galactosamine + GDP + H(+). The protein operates within protein modification; protein glycosylation. Catalyzes the transfer of L-fucose, from a guanosine diphosphate-beta-L-fucose, to the terminal galactose residue of glycoconjugates through an alpha(1,2) linkage leading to H antigen synthesis that is an intermediate substrate in the synthesis of ABO blood group antigens. H antigen is essential for maturation of the glomerular layer of the main olfactory bulb, in cell migration and early cell-cell contacts during tumor associated angiogenesis. Preferentially fucosylates soluble lactose and to a lesser extent fucosylates glycolipids gangliosides GA1 and GM1a. The chain is Galactoside alpha-(1,2)-fucosyltransferase 1 from Gorilla gorilla gorilla (Western lowland gorilla).